A 510-amino-acid chain; its full sequence is ATP synthase subunit alpha, chloroplastic (510 aa).

Residue 170–177 participates in ATP binding; that stretch reads GDRQTGKT.

This sequence belongs to the ATPase alpha/beta chains family. As to quaternary structure, F-type ATPases have 2 components, CF(1) - the catalytic core - and CF(0) - the membrane proton channel. CF(1) has five subunits: alpha(3), beta(3), gamma(1), delta(1), epsilon(1). CF(0) has four main subunits: a, b, b' and c.

The protein localises to the plastid. It localises to the chloroplast thylakoid membrane. It catalyses the reaction ATP + H2O + 4 H(+)(in) = ADP + phosphate + 5 H(+)(out). Its function is as follows. Produces ATP from ADP in the presence of a proton gradient across the membrane. The alpha chain is a regulatory subunit. This chain is ATP synthase subunit alpha, chloroplastic, found in Lotus japonicus (Lotus corniculatus var. japonicus).